Reading from the N-terminus, the 201-residue chain is Orotate phosphoribosyltransferase (201 aa).

5-phospho-alpha-D-ribose 1-diphosphate-binding positions include K90 and 113-121 (EDIITTGGS). Residues T117 and R145 each coordinate orotate.

This sequence belongs to the purine/pyrimidine phosphoribosyltransferase family. PyrE subfamily. Homodimer. It depends on Mg(2+) as a cofactor.

The enzyme catalyses orotidine 5'-phosphate + diphosphate = orotate + 5-phospho-alpha-D-ribose 1-diphosphate. It participates in pyrimidine metabolism; UMP biosynthesis via de novo pathway; UMP from orotate: step 1/2. In terms of biological role, catalyzes the transfer of a ribosyl phosphate group from 5-phosphoribose 1-diphosphate to orotate, leading to the formation of orotidine monophosphate (OMP). The polypeptide is Orotate phosphoribosyltransferase (Sulfurovum sp. (strain NBC37-1)).